The primary structure comprises 348 residues: Protein RecA (348 aa).

Position 65-72 (65-72 (GPESSGKT)) interacts with ATP.

The protein belongs to the RecA family.

It is found in the cytoplasm. Its function is as follows. Can catalyze the hydrolysis of ATP in the presence of single-stranded DNA, the ATP-dependent uptake of single-stranded DNA by duplex DNA, and the ATP-dependent hybridization of homologous single-stranded DNAs. It interacts with LexA causing its activation and leading to its autocatalytic cleavage. The sequence is that of Protein RecA from Saccharophagus degradans (strain 2-40 / ATCC 43961 / DSM 17024).